Reading from the N-terminus, the 290-residue chain is Nitrogenase iron protein 2 (290 aa).

10–17 (GKGGIGKS) serves as a coordination point for ATP. Residue C98 participates in [4Fe-4S] cluster binding. The residue at position 101 (R101) is an ADP-ribosylarginine; by dinitrogenase reductase ADP-ribosyltransferase. C133 contacts [4Fe-4S] cluster.

It belongs to the NifH/BchL/ChlL family. As to quaternary structure, homodimer. [4Fe-4S] cluster serves as cofactor. In terms of processing, the reversible ADP-ribosylation of Arg-101 inactivates the nitrogenase reductase and regulates nitrogenase activity.

It carries out the reaction N2 + 8 reduced [2Fe-2S]-[ferredoxin] + 16 ATP + 16 H2O = H2 + 8 oxidized [2Fe-2S]-[ferredoxin] + 2 NH4(+) + 16 ADP + 16 phosphate + 6 H(+). In terms of biological role, the key enzymatic reactions in nitrogen fixation are catalyzed by the nitrogenase complex, which has 2 components: the iron protein (component 2) and a component 1 which is either a molybdenum-iron protein, a vanadium-iron, or an iron-iron protein. In Azotobacter chroococcum mcd 1, this protein is Nitrogenase iron protein 2 (vnfH).